Consider the following 231-residue polypeptide: MNDVVLSCKNVSKKYTEFKTDIAILKDVNLEIKKGEKVAILGLSGSGKTTLLNVLGGLDKCSAGEVYLMGERFDNQSVNKRAKMRNKHLGFIYQLHHLLPEFTAIENVMIPLAITKKYTKKESIKLANEILKKVGLDHRADHKPAELSGGERQRVAIARALVTNPNCILADEPTGNLDSQRSESIFALMQQLSDDFGISFVIVTHDEKLASRMNKIYRLVDGELELVINSN.

In terms of domain architecture, ABC transporter spans 6–230 (LSCKNVSKKY…DGELELVINS (225 aa)). 42–49 (GLSGSGKT) contacts ATP.

Belongs to the ABC transporter superfamily. Lipoprotein translocase (TC 3.A.1.125) family. In terms of assembly, the complex is composed of two ATP-binding proteins (LolD) and two transmembrane proteins (LolC and LolE).

It localises to the cell inner membrane. Part of the ABC transporter complex LolCDE involved in the translocation of mature outer membrane-directed lipoproteins, from the inner membrane to the periplasmic chaperone, LolA. Responsible for the formation of the LolA-lipoprotein complex in an ATP-dependent manner. The protein is Lipoprotein-releasing system ATP-binding protein LolD of Francisella tularensis subsp. holarctica (strain OSU18).